The sequence spans 387 residues: DNA primase small subunit PriS (387 aa).

Residues Asp-98, Asp-100, and Asp-289 contribute to the active site.

This sequence belongs to the eukaryotic-type primase small subunit family. Heterodimer of a small subunit (PriS) and a large subunit (PriL). Mg(2+) is required as a cofactor. The cofactor is Mn(2+).

In terms of biological role, catalytic subunit of DNA primase, an RNA polymerase that catalyzes the synthesis of short RNA molecules used as primers for DNA polymerase during DNA replication. The small subunit contains the primase catalytic core and has DNA synthesis activity on its own. Binding to the large subunit stabilizes and modulates the activity, increasing the rate of DNA synthesis while decreasing the length of the DNA fragments, and conferring RNA synthesis capability. The DNA polymerase activity may enable DNA primase to also catalyze primer extension after primer synthesis. May also play a role in DNA repair. The sequence is that of DNA primase small subunit PriS from Halorubrum lacusprofundi (strain ATCC 49239 / DSM 5036 / JCM 8891 / ACAM 34).